Consider the following 252-residue polypeptide: Type III pantothenate kinase (252 aa).

6–13 (DVGNTHTT) provides a ligand contact to ATP. 104 to 107 (GADR) is a substrate binding site. Residue Asp106 is the Proton acceptor of the active site. Position 126 (Asp126) interacts with K(+). Thr129 provides a ligand contact to ATP. Residue Thr180 participates in substrate binding.

This sequence belongs to the type III pantothenate kinase family. Homodimer. NH4(+) serves as cofactor. It depends on K(+) as a cofactor.

It localises to the cytoplasm. It carries out the reaction (R)-pantothenate + ATP = (R)-4'-phosphopantothenate + ADP + H(+). It participates in cofactor biosynthesis; coenzyme A biosynthesis; CoA from (R)-pantothenate: step 1/5. Functionally, catalyzes the phosphorylation of pantothenate (Pan), the first step in CoA biosynthesis. The chain is Type III pantothenate kinase from Fervidobacterium nodosum (strain ATCC 35602 / DSM 5306 / Rt17-B1).